Here is a 227-residue protein sequence, read N- to C-terminus: Ornithine decarboxylase antizyme 1 (227 aa).

Residues 20 to 50 (EGDKPSATVHATRTMPLLSLHSRGGRSSESS) are disordered. Positions 36-50 (LLSLHSRGGRSSESS) are enriched in low complexity.

This sequence belongs to the ODC antizyme family. Interacts with ODC1 and thereby sterically blocks ODC homodimerization. Forms a ternary complex with PSMB4 and OAZ1 before PSMB4 is incorporated into the 20S proteasome. Interacts with AZIN2; this interaction disrupts the interaction between the antizyme and ODC1. Interacts with FAM171A1.

In terms of biological role, ornithine decarboxylase (ODC) antizyme protein that negatively regulates ODC activity and intracellular polyamine biosynthesis and uptake in response to increased intracellular polyamine levels. Binds to ODC monomers, inhibiting the assembly of the functional ODC homodimer, and targets the monomers for ubiquitin-independent proteolytic destruction by the 26S proteasome. Triggers ODC degradation by inducing the exposure of a cryptic proteasome-interacting surface of ODC. Stabilizes AZIN2 by interfering with its ubiquitination. Also inhibits cellular uptake of polyamines by inactivating the polyamine uptake transporter. SMAD1/OAZ1/PSMB4 complex mediates the degradation of the CREBBP/EP300 repressor SNIP1. Involved in the translocation of AZIN2 from ER-Golgi intermediate compartment (ERGIC) to the cytosol. The chain is Ornithine decarboxylase antizyme 1 (OAZ1) from Bos taurus (Bovine).